A 195-amino-acid polypeptide reads, in one-letter code: Cysteine/O-acetylserine efflux protein (195 aa).

Residues 1–9 (MTPMLLSAF) lie on the Periplasmic side of the membrane. The helical transmembrane segment at 10 to 32 (WTYTLITALTPGPNNILALSAAT) threads the bilayer. Topologically, residues 33–46 (AHGFRQSIRVLAGM) are cytoplasmic. Residues 47–67 (SLGFLVVMLLCAGIAFSLAVI) form a helical membrane-spanning segment. Residues 68 to 69 (DP) are Periplasmic-facing. Residues 70 to 90 (AIIHLLSWVGAAYILWLAWKI) traverse the membrane as a helical segment. At 91–104 (ATSPAADENARPKP) the chain is on the cytoplasmic side. A helical transmembrane segment spans residues 105 to 125 (VGFWVSFGLQFVNVKIILYGI). Residues 126–141 (TALSTFVLPQTQALNW) lie on the Periplasmic side of the membrane. Residues 142–162 (VIGVSILLALIGTFGNVCWAL) form a helical membrane-spanning segment. The Cytoplasmic segment spans residues 163–176 (AGHLFQRAFRHYGR). A helical transmembrane segment spans residues 177-194 (QLNIILALLLVYCAVRIF). A topological domain (periplasmic) is located at residue Tyr195.

The protein belongs to the Rht family.

It is found in the cell inner membrane. The catalysed reaction is O-acetyl-L-serine(in) = O-acetyl-L-serine(out). It carries out the reaction L-cysteine(in) = L-cysteine(out). Its function is as follows. Exporter of O-acetylserine (OAS) and cysteine. The sequence is that of Cysteine/O-acetylserine efflux protein (eamB) from Salmonella choleraesuis (strain SC-B67).